Reading from the N-terminus, the 228-residue chain is Cytidylate kinase (228 aa).

12–20 (GPSGSGKGT) contributes to the ATP binding site.

This sequence belongs to the cytidylate kinase family. Type 1 subfamily.

The protein resides in the cytoplasm. It carries out the reaction CMP + ATP = CDP + ADP. The catalysed reaction is dCMP + ATP = dCDP + ADP. This chain is Cytidylate kinase, found in Pseudomonas putida (strain ATCC 47054 / DSM 6125 / CFBP 8728 / NCIMB 11950 / KT2440).